Here is a 56-residue protein sequence, read N- to C-terminus: Large ribosomal subunit protein bL33 (56 aa).

It belongs to the bacterial ribosomal protein bL33 family.

The chain is Large ribosomal subunit protein bL33 from Actinobacillus succinogenes (strain ATCC 55618 / DSM 22257 / CCUG 43843 / 130Z).